The sequence spans 166 residues: Alanine racemase (166 aa).

The active-site Proton acceptor; specific for L-alanine is the Tyr-62. Met-110 provides a ligand contact to substrate.

Belongs to the alanine racemase family. The cofactor is pyridoxal 5'-phosphate.

It catalyses the reaction L-alanine = D-alanine. It functions in the pathway amino-acid biosynthesis; D-alanine biosynthesis; D-alanine from L-alanine: step 1/1. Its function is as follows. Catalyzes the interconversion of L-alanine and D-alanine. May also act on other amino acids. The sequence is that of Alanine racemase (alr) from Piscirickettsia salmonis.